The sequence spans 220 residues: Large ribosomal subunit protein uL1 (220 aa).

Belongs to the universal ribosomal protein uL1 family. Part of the 50S ribosomal subunit.

Binds directly to 23S rRNA. The L1 stalk is quite mobile in the ribosome, and is involved in E site tRNA release. In terms of biological role, protein L1 is also a translational repressor protein, it controls the translation of the L11 operon by binding to its mRNA. This chain is Large ribosomal subunit protein uL1, found in Ehrlichia canis (strain Jake).